A 120-amino-acid chain; its full sequence is Crustacean hyperglycemic hormones 4 (120 aa).

An N-terminal signal peptide occupies residues Met1 to Ala26. 3 disulfides stabilise this stretch: Cys53-Cys89, Cys69-Cys85, and Cys72-Cys98. Valine amide is present on Val118.

Belongs to the arthropod CHH/MIH/GIH/VIH hormone family.

It localises to the secreted. In terms of biological role, hormone found in the sinus gland of isopods and decapods which controls the blood sugar level. Has a secretagogue action over the amylase released from the midgut gland. May act as a stress hormone and may be involved in the control of molting and reproduction. The sequence is that of Crustacean hyperglycemic hormones 4 (CHH4) from Penaeus monodon (Giant tiger prawn).